Here is a 239-residue protein sequence, read N- to C-terminus: 4-hydroxy-tetrahydrodipicolinate reductase (239 aa).

NAD(+) contacts are provided by residues 12-17, 94-96, and 118-121; these read GASGRM, GTT, and ASNF. H150 serves as the catalytic Proton donor/acceptor. H151 provides a ligand contact to (S)-2,3,4,5-tetrahydrodipicolinate. Residue K154 is the Proton donor of the active site. 160–161 lines the (S)-2,3,4,5-tetrahydrodipicolinate pocket; sequence GT.

The protein belongs to the DapB family.

The protein resides in the cytoplasm. The enzyme catalyses (S)-2,3,4,5-tetrahydrodipicolinate + NAD(+) + H2O = (2S,4S)-4-hydroxy-2,3,4,5-tetrahydrodipicolinate + NADH + H(+). It carries out the reaction (S)-2,3,4,5-tetrahydrodipicolinate + NADP(+) + H2O = (2S,4S)-4-hydroxy-2,3,4,5-tetrahydrodipicolinate + NADPH + H(+). The protein operates within amino-acid biosynthesis; L-lysine biosynthesis via DAP pathway; (S)-tetrahydrodipicolinate from L-aspartate: step 4/4. Its function is as follows. Catalyzes the conversion of 4-hydroxy-tetrahydrodipicolinate (HTPA) to tetrahydrodipicolinate. This is 4-hydroxy-tetrahydrodipicolinate reductase from Stenotrophomonas maltophilia (strain K279a).